The following is a 399-amino-acid chain: C-type lectin domain family 4 member M (399 aa).

Residues 1–49 (MSDSKEQRVQPLGLLEEDPTTSGIRLFPRDFQFQQTHGHKSSTGCLGHG) lie on the Cytoplasmic side of the membrane. Residues 14 to 15 (LL) carry the Endocytosis signal motif. Residues 50 to 70 (PLVLQLLSFTLLAGVLVAILV) traverse the membrane as a helical; Signal-anchor for type II membrane protein segment. Residues 71–399 (QVYKVPSSLS…KKPTACFRDE (329 aa)) are Extracellular-facing. Asparagine 92 carries an N-linked (GlcNAc...) asparagine glycan. A run of 7 repeats spans residues 108 to 130 (KLQEIYQELIQLKAAVGELPEKS), 131 to 153 (TLQEIYQELTRLKAAVGELPEKS), 154 to 176 (RLQEIYQELTRLKAAVGELPEKS), 177 to 199 (KQQEIYQELTRLKAAVGELPEKS), 200 to 222 (KQQEIYQELTRLKAAVGELPEKS), 223 to 245 (KQQEIYQELTRLKAAVGELPDQS), and 246 to 268 (KQQQIYQELTDLKTAFERLCCRC). The segment at 108–269 (KLQEIYQELI…AFERLCCRCP (162 aa)) is 7 X approximate tandem repeats. 4 cysteine pairs are disulfide-bonded: cysteine 265-cysteine 395, cysteine 268-cysteine 279, cysteine 296-cysteine 389, and cysteine 368-cysteine 381. The 117-residue stretch at 274 to 390 (FFQGNCYFIS…CNVDNYWICK (117 aa)) folds into the C-type lectin domain. Residues glutamate 359, asparagine 361, serine 363, glutamate 366, asparagine 377, and aspartate 378 each coordinate Ca(2+). The N-linked (GlcNAc...) asparagine glycan is linked to asparagine 361.

As to quaternary structure, homotetramer.

The protein localises to the membrane. Functionally, probable pathogen-recognition receptor involved in peripheral immune surveillance in liver. May mediate the endocytosis of pathogens which are subsequently degraded in lysosomal compartments. Probably recognizes in a calcium-dependent manner high mannose N-linked oligosaccharides in a variety of pathogen antigens. Is a receptor for ICAM3, probably by binding to mannose-like carbohydrates. This chain is C-type lectin domain family 4 member M (CLEC4M), found in Hylobates lar (Lar gibbon).